We begin with the raw amino-acid sequence, 231 residues long: MVELNLDAGNVISGDVHRVGILALGSHLENHGPALPIDTDAKIASYVALEASLRTGAKFLGVIYGATEFPYVKHGIHIERDELLEGDLKPVLRKARKRLNIDAAVIVNGHGGNQLEDCVEDLMDELDMEIIWNNRIVEIEGPHAGSGEVSAGIILGIADLTRLGECRPELYPEIGMIGLREAREANKGIDRAARICEKEGINPDPVLGQRILDDAIESVISDVRELLEMLP.

Positions 29, 31, 40, and 110 each coordinate Fe cation.

It belongs to the creatininase superfamily. FAPy deformylase family. Homodimer. The cofactor is Fe(2+). Zn(2+) serves as cofactor.

It carries out the reaction 2-amino-5-formylamino-6-(5-phospho-D-ribosylamino)pyrimidin-4(3H)-one + H2O = 2,5-diamino-6-(1-D-ribosylamino)pyrimidin-4(3H)-one 5'-phosphate + formate + H(+). It participates in cofactor biosynthesis; coenzyme F420 biosynthesis. It functions in the pathway cofactor biosynthesis; riboflavin biosynthesis. Its function is as follows. Catalyzes the hydrolysis of the formamide of 2-amino-5-formylamino-6-ribosylamino-4(3H)-pyrimidinone 5'-monophosphate (FAPy) to form 2,5-diamino-6-ribosylamino-4(3H)-pyrimidinone 5'-phosphate (APy). The sequence is that of 2-amino-5-formylamino-6-ribosylaminopyrimidin-4(3H)-one 5'-monophosphate deformylase from Methanothermobacter marburgensis (strain ATCC BAA-927 / DSM 2133 / JCM 14651 / NBRC 100331 / OCM 82 / Marburg) (Methanobacterium thermoautotrophicum).